The sequence spans 736 residues: 1,4-alpha-glucan branching enzyme GlgB (736 aa).

Catalysis depends on aspartate 415, which acts as the Nucleophile. The active-site Proton donor is glutamate 468.

This sequence belongs to the glycosyl hydrolase 13 family. GlgB subfamily. In terms of assembly, monomer.

It catalyses the reaction Transfers a segment of a (1-&gt;4)-alpha-D-glucan chain to a primary hydroxy group in a similar glucan chain.. It functions in the pathway glycan biosynthesis; glycogen biosynthesis. Catalyzes the formation of the alpha-1,6-glucosidic linkages in glycogen by scission of a 1,4-alpha-linked oligosaccharide from growing alpha-1,4-glucan chains and the subsequent attachment of the oligosaccharide to the alpha-1,6 position. In Rhodopirellula baltica (strain DSM 10527 / NCIMB 13988 / SH1), this protein is 1,4-alpha-glucan branching enzyme GlgB.